The primary structure comprises 65 residues: Large ribosomal subunit protein uL29c (65 aa).

The protein belongs to the universal ribosomal protein uL29 family.

Its subcellular location is the plastid. It is found in the chloroplast. This chain is Large ribosomal subunit protein uL29c (rpl29), found in Guillardia theta (Cryptophyte).